We begin with the raw amino-acid sequence, 319 residues long: ATP-dependent 6-phosphofructokinase (319 aa).

G11 contributes to the ATP binding site. 21-25 contributes to the ADP binding site; sequence RAVVR. ATP-binding positions include 72–73 and 102–105; these read RC and GDGS. D103 serves as a coordination point for Mg(2+). Substrate is bound at residue 125–127; sequence TID. D127 acts as the Proton acceptor in catalysis. R154 serves as a coordination point for ADP. Residues R162 and 169 to 171 contribute to the substrate site; that span reads MGR. ADP-binding positions include 185-187, R211, and 213-215; these read GAE and KKH. Substrate contacts are provided by residues E222, R243, and 249–252; that span reads HIQR.

Belongs to the phosphofructokinase type A (PFKA) family. ATP-dependent PFK group I subfamily. Prokaryotic clade 'B1' sub-subfamily. As to quaternary structure, homotetramer. Requires Mg(2+) as cofactor.

The protein localises to the cytoplasm. The enzyme catalyses beta-D-fructose 6-phosphate + ATP = beta-D-fructose 1,6-bisphosphate + ADP + H(+). It participates in carbohydrate degradation; glycolysis; D-glyceraldehyde 3-phosphate and glycerone phosphate from D-glucose: step 3/4. With respect to regulation, allosterically activated by ADP and other diphosphonucleosides, and allosterically inhibited by phosphoenolpyruvate. Its function is as follows. Catalyzes the phosphorylation of D-fructose 6-phosphate to fructose 1,6-bisphosphate by ATP, the first committing step of glycolysis. In Shouchella clausii (strain KSM-K16) (Alkalihalobacillus clausii), this protein is ATP-dependent 6-phosphofructokinase.